We begin with the raw amino-acid sequence, 360 residues long: Phenylalanine--tRNA ligase alpha subunit (360 aa).

E260 lines the Mg(2+) pocket.

The protein belongs to the class-II aminoacyl-tRNA synthetase family. Phe-tRNA synthetase alpha subunit type 1 subfamily. Tetramer of two alpha and two beta subunits. Requires Mg(2+) as cofactor.

It localises to the cytoplasm. It carries out the reaction tRNA(Phe) + L-phenylalanine + ATP = L-phenylalanyl-tRNA(Phe) + AMP + diphosphate + H(+). The chain is Phenylalanine--tRNA ligase alpha subunit from Methylobacterium nodulans (strain LMG 21967 / CNCM I-2342 / ORS 2060).